The following is a 229-amino-acid chain: Apoptosis regulator Bcl-2 (229 aa).

Positions 10–30 (DNREIVMKYIHYKLSQRGYEW) match the BH4 motif. The tract at residues 30 to 82 (WDAGDAGAAPPGAAPAPGILSSQPGRTPAPSRTSPPPPPAAAAGPAPSPVPPV) is disordered. Positions 33-61 (GDAGAAPPGAAPAPGILSSQPGRTPAPSR) are enriched in low complexity. Position 62 is a phosphothreonine; by MAPK8 (Thr62). Residues 62–81 (TSPPPPPAAAAGPAPSPVPP) are compositionally biased toward pro residues. The residue at position 63 (Ser63) is a Phosphoserine; by MAPK8 and PKC. Ser77 is modified (phosphoserine; by MAPK8). The BH3 motif lies at 83–97 (VHLTLRQAGDDFSRR). The short motif at 126 to 145 (ELFRDGVNWGRIVAFFEFGG) is the BH1 element. The short motif at 177-192 (TWIQDNGGWDAFVELY) is the BH2 element. A helical membrane pass occupies residues 202–223 (FSWLSLKALLSLALVGACITLG).

The protein belongs to the Bcl-2 family. Forms homodimers, and heterodimers with BAX, BAD, BAK and Bcl-X(L). Heterodimerization with BAX requires intact BH1 and BH2 motifs, and is necessary for anti-apoptotic activity. Component of the complex, at least composed of LRPPRC, BECN1 and BCL2; the interactions prevent BECN1 from forming an autophagy-inducing complex with PIK3C3. Interacts with EI24. Also interacts with APAF1, BBC3, BCL2L1, BNIPL, MRPL41 and TP53BP2. Binding to FKBP8 seems to target BCL2 to the mitochondria and probably interferes with the binding of BCL2 to its targets. Interacts with BAG1 in an ATP-dependent manner. Interacts with RAF1 (the 'Ser-338' and 'Ser-339' phosphorylated form). Interacts (via the BH4 domain) with EGLN3; the interaction prevents the formation of the BAX-BCL2 complex and inhibits the anti-apoptotic activity of BCL2. Interacts with G0S2; this interaction also prevents the formation of the anti-apoptotic BAX-BCL2 complex. Interacts with RTL10/BOP. Interacts with the SCF(FBXO10) complex. Interacts (via the loop between motifs BH4 and BH3) with NLRP1 (via LRR repeats), but not with NLRP2, NLRP3, NLRP4, PYCARD, nor MEFV. Interacts with GIMAP3/IAN4, GIMAP4/IAN1 and GIMAP5/IAN5. Interacts with BCAP31. Interacts with IRF3; the interaction is inhibited by Sendai virus infection. Interacts with BECN1; thereby inhibiting autophagy in non-starvation conditions. Interacts with AMBRA1; thereby inhibiting autophagy. Post-translationally, phosphorylation/dephosphorylation on Ser-63 regulates anti-apoptotic activity. Growth factor-stimulated phosphorylation on Ser-63 by PKC is required for the anti-apoptosis activity and occurs during the G2/M phase of the cell cycle. In the absence of growth factors, BCL2 appears to be phosphorylated by other protein kinases such as ERKs and stress-activated kinases. Phosphorylated by MAPK8/JNK1 at Thr-62, Ser-63 and Ser-77, which stimulates starvation-induced autophagy. Dephosphorylated by protein phosphatase 2A (PP2A). Proteolytically cleaved by caspases during apoptosis. The cleaved protein, lacking the BH4 motif, has pro-apoptotic activity, causes the release of cytochrome c into the cytosol promoting further caspase activity. In terms of processing, monoubiquitinated by PRKN, leading to an increase in its stability. Ubiquitinated by SCF(FBXO10), leading to its degradation by the proteasome.

It is found in the mitochondrion outer membrane. It localises to the nucleus membrane. Its subcellular location is the endoplasmic reticulum membrane. The protein localises to the cytoplasm. Its function is as follows. Suppresses apoptosis in a variety of cell systems including factor-dependent lymphohematopoietic and neural cells. Regulates cell death by controlling the mitochondrial membrane permeability. Appears to function in a feedback loop system with caspases. Inhibits caspase activity either by preventing the release of cytochrome c from the mitochondria and/or by binding to the apoptosis-activating factor (APAF-1). Also acts as an inhibitor of autophagy: interacts with BECN1 and AMBRA1 during non-starvation conditions and inhibits their autophagy function. May attenuate inflammation by impairing NLRP1-inflammasome activation, hence CASP1 activation and IL1B release. This is Apoptosis regulator Bcl-2 (BCL2) from Bos taurus (Bovine).